The following is a 273-amino-acid chain: Glutamate racemase (273 aa).

Residues D11–S12 and Y43–G44 contribute to the substrate site. The Proton donor/acceptor role is filled by C74. N75–T76 serves as a coordination point for substrate. C185 serves as the catalytic Proton donor/acceptor. T186–H187 lines the substrate pocket.

The protein belongs to the aspartate/glutamate racemases family. As to quaternary structure, homodimer.

The catalysed reaction is L-glutamate = D-glutamate. Its pathway is cell wall biogenesis; peptidoglycan biosynthesis. Its function is as follows. Provides the (R)-glutamate required for cell wall biosynthesis. This chain is Glutamate racemase, found in Enterococcus faecalis (strain ATCC 700802 / V583).